The primary structure comprises 128 residues: Large ribosomal subunit protein bL19 (128 aa).

It belongs to the bacterial ribosomal protein bL19 family.

Functionally, this protein is located at the 30S-50S ribosomal subunit interface and may play a role in the structure and function of the aminoacyl-tRNA binding site. In Paracidovorax citrulli (strain AAC00-1) (Acidovorax citrulli), this protein is Large ribosomal subunit protein bL19.